The primary structure comprises 84 residues: Small ribosomal subunit protein uS17 (84 aa).

The protein belongs to the universal ribosomal protein uS17 family. Part of the 30S ribosomal subunit.

Functionally, one of the primary rRNA binding proteins, it binds specifically to the 5'-end of 16S ribosomal RNA. The sequence is that of Small ribosomal subunit protein uS17 from Clostridium botulinum (strain Okra / Type B1).